Consider the following 510-residue polypeptide: Protein PLASTID TRANSCRIPTIONALLY ACTIVE 16, chloroplastic (510 aa).

The span at 1 to 14 shows a compositional bias: polar residues; sequence MASSSTSFPLTTAP. The transit peptide at 1–19 directs the protein to the chloroplast; it reads MASSSTSFPLTTAPPQGVR. Disordered stretches follow at residues 1-24 and 38-58; these read MASS…NRRK and LGKT…NPFQ. Positions 41–51 are enriched in basic and acidic residues; that stretch reads TKGDDDSEGKQ. NADP(+) is bound at residue 94 to 123; the sequence is IFVAGATGQAGIRIAQTLLQRGFSVRAGVP. Positions 354–403 form a coiled coil; sequence ARERAEEEAKVAADKAREAAEAAKEFEKQMQKLSEKEAEAASLAEDAQQK. At serine 395 the chain carries Phosphoserine. Residue threonine 451 is modified to Phosphothreonine; by STN7. The disordered stretch occupies residues 453 to 493; sequence RGQAKARNLPPKKAVVKQRPSSPFASKPKEERPKKPEKEVR. Basic and acidic residues predominate over residues 479 to 493; it reads KPKEERPKKPEKEVR.

This sequence belongs to the NAD(P)-dependent epimerase/dehydratase family. In terms of assembly, component of the plastid transcriptionally active chromosome required for plastid gene expression. Interacts with DEGP1 under high light conditions and maybe its degradation target. In terms of processing, excluded from chloroplast nucleoid when phosphorylated on Thr-451 by STN7 that may regulate membrane-anchoring functions of the nucleoid.

Its subcellular location is the plastid. The protein resides in the chloroplast stroma. It localises to the chloroplast nucleoid. The protein localises to the chloroplast thylakoid membrane. In terms of biological role, probably involved in the regulation of plastid gene expression. The protein is Protein PLASTID TRANSCRIPTIONALLY ACTIVE 16, chloroplastic of Arabidopsis thaliana (Mouse-ear cress).